The primary structure comprises 527 residues: N-acetylglutamate synthase, mitochondrial (527 aa).

Residues 1–39 constitute a mitochondrion transit peptide; the sequence is MAKVNSGSSGCRAMVMAGQFWTKPFALSSQRSGPHRRSA. Residues 28–65 form a disordered region; the sequence is SSQRSGPHRRSAAEVNRRMSSSRTAGHGSKTPLWSQQE. The tract at residues 40 to 83 is may stabilize the oligomeric structure; sequence AEVNRRMSSSRTAGHGSKTPLWSQQESYNHSSLGERSAWSNRTL. The interval 40 to 361 is amino-acid kinase domain (AAK); it reads AEVNRRMSSS…SGTLFKNGDP (322 aa). The region spanning 360–511 is the N-acetyltransferase domain; it reads DPIRRYSSLE…FAKSHPDSFC (152 aa). Residues Lys-386, Lys-429, and 459–464 contribute to the substrate site; that span reads RSRTTN.

Belongs to the acetyltransferase family. Homodimer. Homotetramer.

Its subcellular location is the mitochondrion matrix. It carries out the reaction L-glutamate + acetyl-CoA = N-acetyl-L-glutamate + CoA + H(+). Its activity is regulated as follows. Inhibited by L-arginine. Its function is as follows. Plays a role in the regulation of ureagenesis by producing the essential cofactor N-acetylglutamate (NAG), thus modulating carbamoylphosphate synthase I (cps1) activity. The chain is N-acetylglutamate synthase, mitochondrial from Danio rerio (Zebrafish).